We begin with the raw amino-acid sequence, 287 residues long: MAAITAALVKELRERTGEGMMDCKKALEKAGGDIEKAIDDMRASGAIKAAKKAGNVAAEGAIAVKTDGKSAVLLEVNSQTDFLALQDDFKNFVAESLEEAFAQKLTDAAPLIASREAAREALVAKCGENVNIRRLVRVEGDVVGAYLHGNKIGAVVVLKGGDVELAKNIAMHVAASNPEFLDASEISAEAIEREKNVFLQLNADKIAGKPGNIVENMINGRITKFKAEASLKEQAFVMNPEVKVGELAKKAGAEIVSFTYFKVGEGIEKPVDDFAAEVAAQVAAAKQ.

Residues 80–83 (TDFL) are involved in Mg(2+) ion dislocation from EF-Tu.

It belongs to the EF-Ts family.

The protein resides in the cytoplasm. Its function is as follows. Associates with the EF-Tu.GDP complex and induces the exchange of GDP to GTP. It remains bound to the aminoacyl-tRNA.EF-Tu.GTP complex up to the GTP hydrolysis stage on the ribosome. The sequence is that of Elongation factor Ts from Pseudomonas putida (strain W619).